Consider the following 102-residue polypeptide: Major basic nuclear protein 2 (102 aa).

The span at 1–11 (MKAMKATKKAM) shows a compositional bias: basic residues. The segment at 1 to 43 (MKAMKATKKAMTKTGLAEALAPKPSSARRIAPPSSRAWPPSAQ) is disordered. Low complexity predominate over residues 21–42 (APKPSSARRIAPPSSRAWPPSA).

Its subcellular location is the nucleus. The protein is Major basic nuclear protein 2 (HCc2) of Crypthecodinium cohnii (Dinoflagellate).